A 356-amino-acid polypeptide reads, in one-letter code: Mitogen-activated protein kinase PMK1 (356 aa).

One can recognise a Protein kinase domain in the interval 24–312 (YDIQDVVGEG…VEEALKHPYL (289 aa)). Residues 30–38 (VGEGAYGVV) and K53 each bind ATP.

This sequence belongs to the protein kinase superfamily. CMGC Ser/Thr protein kinase family. MAP kinase subfamily. Mg(2+) is required as a cofactor. Post-translationally, phosphorylated by MST7.

It catalyses the reaction L-seryl-[protein] + ATP = O-phospho-L-seryl-[protein] + ADP + H(+). The enzyme catalyses L-threonyl-[protein] + ATP = O-phospho-L-threonyl-[protein] + ADP + H(+). In terms of biological role, mitogen-activated protein kinase; part of the MST11-MST7-PMK1 MAP kinase (MAPK) cascade that is essential for appressorium formation, penetration and invasive growth. Central regulator of appressorium development that acts downstream of the cAMP signal. The MST11-MST7-PMK1 MAP kinase cascade transduces signals from the cell surface sensors MDB2 and SHO1 that recognize various surface signals such as surface hydrophobicity, cutin monomers, and rice leaf waxes. Regulates expression of secreted fungal effector proteins implicated of host immune defenses, preventing reactive oxygen species generation and excessive callose deposition at plasmodesmata. Furthermore, controls the hyphal constriction required for fungal growth from one rice cell to the neighboring cell, enabling host tissue colonization and blast disease. Targets downstream of the PMK1-MAPK pathway include transcription factor MST12 and pathogenicity-related genes GAS1 and GAS2, both of which are expressed during appressorium formation, even if regulation of MST12 is not associated with expression of GAS1 or GAS2. The sequence is that of Mitogen-activated protein kinase PMK1 from Pyricularia oryzae (Rice blast fungus).